The following is a 357-amino-acid chain: Histidinol-phosphate aminotransferase (357 aa).

N6-(pyridoxal phosphate)lysine is present on K218.

It belongs to the class-II pyridoxal-phosphate-dependent aminotransferase family. Histidinol-phosphate aminotransferase subfamily. In terms of assembly, homodimer. Pyridoxal 5'-phosphate serves as cofactor.

It carries out the reaction L-histidinol phosphate + 2-oxoglutarate = 3-(imidazol-4-yl)-2-oxopropyl phosphate + L-glutamate. It participates in amino-acid biosynthesis; L-histidine biosynthesis; L-histidine from 5-phospho-alpha-D-ribose 1-diphosphate: step 7/9. The protein is Histidinol-phosphate aminotransferase of Chlorobium luteolum (strain DSM 273 / BCRC 81028 / 2530) (Pelodictyon luteolum).